Consider the following 428-residue polypeptide: Histidine--tRNA ligase (428 aa).

Belongs to the class-II aminoacyl-tRNA synthetase family. Homodimer.

Its subcellular location is the cytoplasm. It carries out the reaction tRNA(His) + L-histidine + ATP = L-histidyl-tRNA(His) + AMP + diphosphate + H(+). This chain is Histidine--tRNA ligase, found in Mesomycoplasma hyopneumoniae (strain 7448) (Mycoplasma hyopneumoniae).